Reading from the N-terminus, the 559-residue chain is Glucosylglycerate phosphorylase (559 aa).

The Nucleophile role is filled by D229.

This sequence belongs to the glycosyl hydrolase 13 family. Glucosylglycerate phosphorylase subfamily.

It catalyses the reaction (2R)-2-O-(alpha-D-glucopyranosyl)-glycerate + phosphate = (R)-glycerate + alpha-D-glucose 1-phosphate. Functionally, catalyzes the reversible phosphorolysis of glucosylglycerate into alpha-D-glucose 1-phosphate (Glc1P) and D-glycerate (also called (R)-glycerate). May be a regulator of intracellular levels of glucosylglycerate, a compatible solute that primarily protects organisms facing salt stress and very specific nutritional constraints. Cannot catalyze the phosphorolysis of sucrose. Does not act on other sugars such as alpha-D-galactose 1-phosphate, alpha-D-mannose 1-phosphate or beta-D-glucose 1-phosphate; in vitro D-erythronate can substitute for D-glycerate with a much lower efficiency. The protein is Glucosylglycerate phosphorylase (ycjM) of Escherichia coli (strain K12).